Here is a 144-residue protein sequence, read N- to C-terminus: NADH-ubiquinone oxidoreductase chain 6 (144 aa).

5 consecutive transmembrane segments (helical) span residues 1 to 21 (MLGS…INVD), 26 to 46 (SFFL…FLHV), 47 to 67 (WFSY…LVYF), 76 to 96 (VVTP…YPFF), and 108 to 128 (FYFS…IFFM).

The protein belongs to the complex I subunit 6 family.

It localises to the mitochondrion membrane. It catalyses the reaction a ubiquinone + NADH + 5 H(+)(in) = a ubiquinol + NAD(+) + 4 H(+)(out). Functionally, core subunit of the mitochondrial membrane respiratory chain NADH dehydrogenase (Complex I) that is believed to belong to the minimal assembly required for catalysis. Complex I functions in the transfer of electrons from NADH to the respiratory chain. The immediate electron acceptor for the enzyme is believed to be ubiquinone. The polypeptide is NADH-ubiquinone oxidoreductase chain 6 (ND6) (Ascaris suum (Pig roundworm)).